Consider the following 370-residue polypeptide: Proline-rich protein 5-like (370 aa).

Phosphoserine is present on Ser-28. Residues 327–370 (PTFPPPHRQCSSEPSILDSPDEMELEDVASGSQEDSELNCASLS) are disordered.

This sequence belongs to the PROTOR family. In terms of assembly, interacts with the mammalian target of rapamycin complex 2 (mTORC2) which contains MTOR, MLST8, PRR5, RICTOR, MAPKAP1 and DEPTOR. Interacts with RFFL. Interacts (via C-terminus) with ZFP36 (via C-terminus); this interaction may accelerate ZFP36-mediated mRNA decay during stress. Interacts with RICTOR. In terms of processing, ubiquitinated. Ubiquitination by RFFL promotes proteasomal degradation of PRR5L thereby modifying the substrate-specific activity of the mTORC2 complex. Ubiquitination by RFFL is stimulated by LPA/lysophosphatidic acid.

Its function is as follows. Associates with the mTORC2 complex that regulates cellular processes including survival and organization of the cytoskeleton. Regulates the activity of the mTORC2 complex in a substrate-specific manner preventing for instance the specific phosphorylation of PKCs and thereby controlling cell migration. Plays a role in the stimulation of ZFP36-mediated mRNA decay of several ZFP36-associated mRNAs, such as TNF-alpha and GM-CSF, in response to stress. Required for ZFP36 localization to cytoplasmic stress granule (SG) and P-body (PB) in response to stress. This Rattus norvegicus (Rat) protein is Proline-rich protein 5-like (Prr5l).